We begin with the raw amino-acid sequence, 270 residues long: Glutamate 5-kinase (270 aa).

Residue Lys17 participates in ATP binding. The substrate site is built by Ser57, Asp144, and Asn160. ATP-binding positions include 180-181 (SD) and 222-228 (TGGMTSK).

This sequence belongs to the glutamate 5-kinase family.

It localises to the cytoplasm. It carries out the reaction L-glutamate + ATP = L-glutamyl 5-phosphate + ADP. It functions in the pathway amino-acid biosynthesis; L-proline biosynthesis; L-glutamate 5-semialdehyde from L-glutamate: step 1/2. Its function is as follows. Catalyzes the transfer of a phosphate group to glutamate to form L-glutamate 5-phosphate. The polypeptide is Glutamate 5-kinase (Lactococcus lactis subsp. cremoris (strain SK11)).